Here is a 663-residue protein sequence, read N- to C-terminus: RING finger protein 145 (663 aa).

The next 14 membrane-spanning stretches (helical) occupy residues 53 to 73 (YLAL…LTLP), 77 to 97 (LVQL…HQIS), 123 to 143 (FTTA…VMKT), 146 to 166 (IWLF…VPLE), 168 to 188 (IVII…YFLG), 205 to 222 (LVQV…MSLW), 225 to 245 (LVVP…QIYS), 275 to 295 (YSLL…LTLC), 316 to 336 (TEGV…LQVV), 340 to 360 (FLLS…MLEI), 384 to 404 (SLCL…CQFF), 410 to 430 (LLII…TLFI), 460 to 480 (LLEF…TIFG), and 482 to 502 (WTVM…WLRA). The YLYF motif motif lies at 81–84 (YLYF). C537 is an active-site residue. An RING-type; atypical zinc finger spans residues 537–575 (CAICYQDMKSAVITPCSHFFHAGCLKKWLYVQETCPLCH). A disordered region spans residues 607–663 (EGTEPPGQEHTPGTRIQEGSRDNNEYIARRPDNQEGAFDPKEYPHSAKDEAHPVESA). Residues 624–663 (EGSRDNNEYIARRPDNQEGAFDPKEYPHSAKDEAHPVESA) show a composition bias toward basic and acidic residues.

In terms of assembly, interacts (via YLYF motif) with INSIG1 and INSIG2.

The protein resides in the endoplasmic reticulum membrane. The enzyme catalyses S-ubiquitinyl-[E2 ubiquitin-conjugating enzyme]-L-cysteine + [acceptor protein]-L-lysine = [E2 ubiquitin-conjugating enzyme]-L-cysteine + N(6)-ubiquitinyl-[acceptor protein]-L-lysine.. In terms of biological role, E3 ubiquitin ligase that catalyzes the direct transfer of ubiquitin from E2 ubiquitin-conjugating enzyme to a specific substrate. In response to bacterial infection, negatively regulates the phagocyte oxidative burst by controlling the turnover of the NADPH oxidase complex subunits. Promotes monoubiquitination of CYBA and 'Lys-48'-linked polyubiquitination and degradation of CYBB NADPH oxidase catalytic subunits, both essential for the generation of antimicrobial reactive oxygen species. Involved in the maintenance of cholesterol homeostasis. In response to high sterol concentrations ubiquitinates HMGCR, a rate-limiting enzyme in cholesterol biosynthesis, and targets it for degradation. The interaction with INSIG1 is required for this function. In addition, triggers ubiquitination of SCAP, likely inhibiting its transport to the Golgi apparatus and the subsequent processing/maturation of SREBPF2, ultimately down-regulating cholesterol biosynthesis. The protein is RING finger protein 145 of Homo sapiens (Human).